A 157-amino-acid polypeptide reads, in one-letter code: Endoribonuclease YbeY (157 aa).

Positions 111, 115, and 121 each coordinate Zn(2+). Residues 136–157 form a disordered region; the sequence is ELLAELGHPDPYADDETDSITH. Positions 147 to 157 are enriched in acidic residues; sequence YADDETDSITH.

The protein belongs to the endoribonuclease YbeY family. It depends on Zn(2+) as a cofactor.

The protein resides in the cytoplasm. Its function is as follows. Single strand-specific metallo-endoribonuclease involved in late-stage 70S ribosome quality control and in maturation of the 3' terminus of the 16S rRNA. The protein is Endoribonuclease YbeY of Pseudomonas putida (strain ATCC 700007 / DSM 6899 / JCM 31910 / BCRC 17059 / LMG 24140 / F1).